A 4151-amino-acid chain; its full sequence is Mycoketide-CoA synthase (4151 aa).

Residues 2-32 (VDQLQHATEALRKALVQVERLKRTNRALLER) are a coiled coil. The Ketosynthase family 3 (KS3) 1 domain occupies 34 to 457 (SEPIAIVGMS…GTNAHVIIEA (424 aa)). 2 module regions span residues 35–2038 (EPIA…RTEL) and 2057–4070 (DPIA…RREL). Residue cysteine 203 is the Acyl-thioester intermediate; for beta-ketoacyl synthase 1 activity of the active site. Active-site for beta-ketoacyl synthase 1 activity residues include histidine 338 and histidine 379. The acyltransferase 1 stretch occupies residues 559–880 (VFVFPGQGSQ…AASAFVAGVA (322 aa)). The active-site Acyl-ester intermediate; for acyltransferase 1 activity is serine 650. Positions 926 to 1048 (HPLLGAVVDL…GILRPGSVEP (123 aa)) are N-terminal hotdog fold 1. A dehydratase 1 region spans residues 926–1194 (HPLLGAVVDL…VARPVTERQL (269 aa)). Residues 926–1195 (HPLLGAVVDL…ARPVTERQLL (270 aa)) form the PKS/mFAS DH 1 domain. The Proton acceptor; for dehydratase activity 1 role is filled by histidine 958. Positions 1060–1195 (AVTVDVADGY…ARPVTERQLL (136 aa)) are C-terminal hotdog fold 1. Aspartate 1120 acts as the Proton donor; for dehydratase activity 1 in catalysis. Positions 1366 to 1671 (GTFENLRLEP…QARHTGKVVM (306 aa)) are enoyl reductase 1. The segment at 1680–1858 (GTVLITGGTG…AISLGWGLWD (179 aa)) is beta-ketoacyl reductase 1. Catalysis depends on tyrosine 1828, which acts as the For beta-ketoacyl reductase 1 activity. The region spanning 1963–2038 (AVLLGLVRLH…RLASYIRTEL (76 aa)) is the Carrier 1 domain. O-(pantetheine 4'-phosphoryl)serine is present on serine 1998. Residues 2056–2480 (EDPIAIVGMA…GTNAHVIIEA (425 aa)) form the Ketosynthase family 3 (KS3) 2 domain. The active-site Acyl-thioester intermediate; for beta-ketoacyl synthase 2 activity is the cysteine 2226. Active-site for beta-ketoacyl synthase 2 activity residues include histidine 2361 and histidine 2402. The interval 2582 to 2893 (VFVFPGQGSQ…AVAQGFVTGM (312 aa)) is acyltransferase 2. The active-site Acyl-ester intermediate; for acyltransferase 2 activity is serine 2672. The segment at 2940-3062 (HALLGAVIDL…GALRAGSAEP (123 aa)) is N-terminal hotdog fold 2. A dehydratase 2 region spans residues 2940–3215 (HALLGAVIDL…ARPVTDQQLR (276 aa)). The PKS/mFAS DH 2 domain maps to 2940 to 3215 (HALLGAVIDL…ARPVTDQQLR (276 aa)). Histidine 2972 (proton acceptor; for dehydratase activity 2) is an active-site residue. The segment at 3074–3215 (AVPVEVADGY…ARPVTDQQLR (142 aa)) is C-terminal hotdog fold 2. Aspartate 3135 functions as the Proton donor; for dehydratase activity 2 in the catalytic mechanism. The interval 3395-3701 (GTFENLRLEL…QARHTGKVVM (307 aa)) is enoyl reductase 2. The segment at 3710 to 3888 (GTVLITGGTG…AISLGWGLWD (179 aa)) is beta-ketoacyl reductase 2. Residue tyrosine 3858 is the For beta-ketoacyl reductase 2 activity of the active site. The Carrier 2 domain occupies 3995 to 4070 (AVLLDLVRSH…ALAGYMRREL (76 aa)). At serine 4030 the chain carries O-(pantetheine 4'-phosphoryl)serine.

As to quaternary structure, forms a large supramolecular assembly mediated through specific interactions between the N- and C-terminus linkers.

It catalyses the reaction a medium-chain fatty acyl-CoA + 5 (S)-methylmalonyl-CoA + 5 malonyl-CoA + 22 NADPH + 32 H(+) = a mycoketide-CoA + 10 CO2 + 22 NADP(+) + 10 CoA + 11 H2O. It participates in lipid metabolism; fatty acid metabolism. Involved in the synthesis of beta-D-mannosyl phosphomycoketide (MPM), an antigenic mycobacterial polyketide. Binds a fatty acyl-CoA as a starter unit, and extends it by five rounds of alternative additions of malonyl-CoA and methylmalonyl-CoA extender units. Depending on the starter unit, the enzyme forms mycoketide-CoAs of different lengths. Shows preference for small-/medium-chain starter fatty acyl substrates. Uses a hybrid modularly iterative mechanism, by forming a supramolecular assembly to perform repetitive cycles of iterations. In Mycobacterium tuberculosis (strain ATCC 25618 / H37Rv), this protein is Mycoketide-CoA synthase.